The following is a 306-amino-acid chain: Non-specific ribonucleoside hydrolase RihC (306 aa).

The active site involves histidine 235.

This sequence belongs to the IUNH family. RihC subfamily.

Functionally, hydrolyzes both purine and pyrimidine ribonucleosides with a broad-substrate specificity. This chain is Non-specific ribonucleoside hydrolase RihC, found in Salmonella paratyphi B (strain ATCC BAA-1250 / SPB7).